Reading from the N-terminus, the 1517-residue chain is Neurite extension and migration factor (1517 aa).

Positions 381-405 (DKKKGKEEVHEDKSIEKKDEKDNGE) are enriched in basic and acidic residues. 7 disordered regions span residues 381–416 (DKKK…PCSG), 505–529 (VNER…PKKR), 644–697 (SMEA…GLIG), 732–775 (KKIK…HMSE), 1065–1084 (RHSS…SPQS), 1161–1228 (DEPA…KKGK), and 1372–1422 (AGTP…SSED). The span at 644–663 (SMEASASSKQVSFGSDQKQA) shows a compositional bias: polar residues. Over residues 678–687 (SALLAAPSSA) the composition is skewed to low complexity. The span at 764–773 (TPGTSNSSHM) shows a compositional bias: polar residues.

The protein localises to the nucleus. Its subcellular location is the cytoplasm. In terms of biological role, involved in neurite outgrowth by regulating cell-cell adhesion via the N-cadherin signaling pathway. May act by regulating expression of protein-coding genes, such as N-cadherins and integrin beta-1 (ITGB1). This Rattus norvegicus (Rat) protein is Neurite extension and migration factor.